The chain runs to 421 residues: Inner membrane transport protein YdiN (421 aa).

Residues 1-9 are Cytoplasmic-facing; that stretch reads MSQNKAFST. The chain crosses the membrane as a helical span at residues 10-30; it reads PFILAVLCIYFSYFLHGISVI. The Periplasmic portion of the chain corresponds to 31–49; it reads TLAQNMSSLAEKFSTDNAG. The helical transmembrane segment at 50–70 threads the bilayer; that stretch reads IAYLISGIGLGRLISILFFGV. Residues 71–78 are Cytoplasmic-facing; that stretch reads ISDKFGRR. Residues 79–99 traverse the membrane as a helical segment; it reads AVILMAVIMYLLFFFGIPACP. A topological domain (periplasmic) is located at residue N100. The chain crosses the membrane as a helical span at residues 101–121; the sequence is LTLAYGLAVCVGIANSALDTG. Topologically, residues 122–136 are cytoplasmic; that stretch reads GYPALMECFPKASGS. Residues 137 to 157 form a helical membrane-spanning segment; it reads AVILVKAMVSFGQMFYPMLVS. At 158 to 163 the chain is on the periplasmic side; that stretch reads YMLLNN. Residues 164–184 form a helical membrane-spanning segment; the sequence is IWYGYGLIIPGILFVLITLML. The Cytoplasmic portion of the chain corresponds to 185–215; that stretch reads LKSKFPSQLVDASVTNELPQMNSKPLVWLEG. A helical membrane pass occupies residues 216-236; the sequence is VSSVLFGVAAFSTFYVIVVWM. At 237–251 the chain is on the periplasmic side; the sequence is PKYAMAFAGMSEAEA. A helical transmembrane segment spans residues 252–272; that stretch reads LKTISYYSMGSLVCVFIFAAL. At 273 to 279 the chain is on the cytoplasmic side; it reads LKKMVRP. The helical transmembrane segment at 280–300 threads the bilayer; sequence IWANVFNSALATITAAIIYLY. Over 301 to 308 the chain is Periplasmic; that stretch reads PSPLVCNA. A helical transmembrane segment spans residues 309–329; sequence GAFVIGFSAAGGILQLGVSVM. The Cytoplasmic segment spans residues 330–342; the sequence is SEFFPKSKAKVTS. A helical membrane pass occupies residues 343–363; sequence IYMMMGGLANFVIPLITGYLS. At 364–369 the chain is on the periplasmic side; it reads NIGLQY. Residues 370-390 traverse the membrane as a helical segment; the sequence is IIVLDFTFALLALITAIIVFI. Residues 391 to 421 lie on the Cytoplasmic side of the membrane; sequence RYYRVFIIPENDVRFGERKFCTRLNTIKHRG.

This sequence belongs to the major facilitator superfamily.

Its subcellular location is the cell inner membrane. In Escherichia coli (strain K12), this protein is Inner membrane transport protein YdiN (ydiN).